The chain runs to 217 residues: Imidazole glycerol phosphate synthase subunit HisH (217 aa).

A Glutamine amidotransferase type-1 domain is found at 1–212 (MLAILDYKAG…YEYCRQSRQE (212 aa)). The Nucleophile role is filled by Cys79. Catalysis depends on residues His187 and Glu189.

As to quaternary structure, heterodimer of HisH and HisF.

It localises to the cytoplasm. The catalysed reaction is 5-[(5-phospho-1-deoxy-D-ribulos-1-ylimino)methylamino]-1-(5-phospho-beta-D-ribosyl)imidazole-4-carboxamide + L-glutamine = D-erythro-1-(imidazol-4-yl)glycerol 3-phosphate + 5-amino-1-(5-phospho-beta-D-ribosyl)imidazole-4-carboxamide + L-glutamate + H(+). The enzyme catalyses L-glutamine + H2O = L-glutamate + NH4(+). Its pathway is amino-acid biosynthesis; L-histidine biosynthesis; L-histidine from 5-phospho-alpha-D-ribose 1-diphosphate: step 5/9. Functionally, IGPS catalyzes the conversion of PRFAR and glutamine to IGP, AICAR and glutamate. The HisH subunit catalyzes the hydrolysis of glutamine to glutamate and ammonia as part of the synthesis of IGP and AICAR. The resulting ammonia molecule is channeled to the active site of HisF. The protein is Imidazole glycerol phosphate synthase subunit HisH of Desulfovibrio desulfuricans (strain ATCC 27774 / DSM 6949 / MB).